A 356-amino-acid chain; its full sequence is 1-deoxy-D-xylulose 5-phosphate reductoisomerase (356 aa).

Residues T7, G8, S9, I10, G31, N33, and N111 each contribute to the NADPH site. A 1-deoxy-D-xylulose 5-phosphate-binding site is contributed by K112. E113 lines the NADPH pocket. Position 131 (D131) interacts with Mn(2+). Positions 132, 133, 155, and 178 each coordinate 1-deoxy-D-xylulose 5-phosphate. Mn(2+) is bound at residue E133. Residue G184 participates in NADPH binding. The 1-deoxy-D-xylulose 5-phosphate site is built by S191, N196, K197, and E200. Mn(2+) is bound at residue E200.

It belongs to the DXR family. Mg(2+) serves as cofactor. It depends on Mn(2+) as a cofactor.

The enzyme catalyses 2-C-methyl-D-erythritol 4-phosphate + NADP(+) = 1-deoxy-D-xylulose 5-phosphate + NADPH + H(+). The protein operates within isoprenoid biosynthesis; isopentenyl diphosphate biosynthesis via DXP pathway; isopentenyl diphosphate from 1-deoxy-D-xylulose 5-phosphate: step 1/6. In terms of biological role, catalyzes the NADPH-dependent rearrangement and reduction of 1-deoxy-D-xylulose-5-phosphate (DXP) to 2-C-methyl-D-erythritol 4-phosphate (MEP). The protein is 1-deoxy-D-xylulose 5-phosphate reductoisomerase of Campylobacter jejuni (strain RM1221).